The sequence spans 264 residues: Octanoyltransferase (264 aa).

The BPL/LPL catalytic domain occupies 74–262 (GTASELVWLV…AFESVFGPRQ (189 aa)). Substrate is bound by residues 113-120 (RGGEYTYH), 193-195 (AIG), and 206-208 (GIA). Cys224 (acyl-thioester intermediate) is an active-site residue.

This sequence belongs to the LipB family.

Its subcellular location is the cytoplasm. The enzyme catalyses octanoyl-[ACP] + L-lysyl-[protein] = N(6)-octanoyl-L-lysyl-[protein] + holo-[ACP] + H(+). Its pathway is protein modification; protein lipoylation via endogenous pathway; protein N(6)-(lipoyl)lysine from octanoyl-[acyl-carrier-protein]: step 1/2. Catalyzes the transfer of endogenously produced octanoic acid from octanoyl-acyl-carrier-protein onto the lipoyl domains of lipoate-dependent enzymes. Lipoyl-ACP can also act as a substrate although octanoyl-ACP is likely to be the physiological substrate. The polypeptide is Octanoyltransferase (Brucella melitensis biotype 1 (strain ATCC 23456 / CCUG 17765 / NCTC 10094 / 16M)).